The primary structure comprises 315 residues: Protoheme IX farnesyltransferase (315 aa).

9 helical membrane passes run 21 to 41 (YFALLKPRVMSLVVFTALVGL), 52 to 74 (VGFCAILFIAVGAGASGALNMWW), 98 to 118 (GEALALGLGLSGLSVVMLALA), 121 to 141 (LLAAGLLAFTIFFYAVVYSMW), 150 to 170 (IVIGGAAGAFPPMIGWVAATG), 177 to 197 (VLMFALIFMWTPPHFWALALF), 223 to 243 (ILVYTVLLVPVALGLALTPVA), 246 to 266 (LYLATALVLNAIFLKGAWDIW), and 284 to 304 (FFKFSLLYLALHFTALLAEAI).

This sequence belongs to the UbiA prenyltransferase family. Protoheme IX farnesyltransferase subfamily. Interacts with CtaA.

Its subcellular location is the cell inner membrane. The enzyme catalyses heme b + (2E,6E)-farnesyl diphosphate + H2O = Fe(II)-heme o + diphosphate. The protein operates within porphyrin-containing compound metabolism; heme O biosynthesis; heme O from protoheme: step 1/1. Its function is as follows. Converts heme B (protoheme IX) to heme O by substitution of the vinyl group on carbon 2 of heme B porphyrin ring with a hydroxyethyl farnesyl side group. The protein is Protoheme IX farnesyltransferase of Dinoroseobacter shibae (strain DSM 16493 / NCIMB 14021 / DFL 12).